The primary structure comprises 201 residues: Type III effector protein HopBF1 (201 aa).

Positions 39, 40, 41, 106, 108, and 113 each coordinate ATP. Aspartate 154 is an active-site residue. Residue glutamine 156 coordinates ATP.

Belongs to the HopBF1 family.

Its subcellular location is the secreted. The protein localises to the host cell. It carries out the reaction L-seryl-[protein] + ATP = O-phospho-L-seryl-[protein] + ADP + H(+). Effector protein that targets and inactivates the plant molecular chaperone HSP90 during infection. HopBF1 is recognized by HSP90 as a host client. As a result, HopBF1 phosphorylates HSP90, leading to the inactivation of the HSP90 ATPase activity and chaperone function. Phosphorylation of HSP90 prevents activation of immune receptors that trigger the hypersensitive response in plants. HopBF1 is sufficient to cause severe disease symptoms in plants infected with P.syringae. In vitro, can phosphorylate the recombinant yeast HSP82 (HSP90) on Ser-99, Triticum aestivum (wheat) HSP90 and human HSP 90-beta, but not the prokaryotic HSP90 orthologs, HtpG from E.coli and P.syringae. Does not act on generic protein kinase substrates such as casein and myelin basic protein, as well as the yeast HSP70s and Bip chaperones. This Pseudomonas syringae pv. syringae (strain FF5) protein is Type III effector protein HopBF1.